The sequence spans 364 residues: Medium-wave-sensitive opsin 1 (364 aa).

Positions 1–24 (MAQRWDPQRLAGGQPQDSHEDSTQ) are disordered. At 1 to 52 (MAQRWDPQRLAGGQPQDSHEDSTQSSIFTYTNSNATRGPFEGPNYHIAPRWV) the chain is on the extracellular side. Residues 17–43 (DSHEDSTQSSIFTYTNSNATRGPFEGP) form a required for 11-cis-retinal regeneration region. N-linked (GlcNAc...) asparagine glycosylation occurs at asparagine 34. A helical transmembrane segment spans residues 53-77 (YHITSTWMIIVVIASVFTNGLVLVA). Residues 78–89 (TMKFKKLRHPLN) lie on the Cytoplasmic side of the membrane. A helical transmembrane segment spans residues 90–115 (WILVNLAIADLAETVIASTISVVNQL). The Extracellular segment spans residues 116–129 (YGYFVLGHPLCVVE). An intrachain disulfide couples cysteine 126 to cysteine 203. The helical transmembrane segment at 130-149 (GYTVSVCGITGLWSLAIISW) threads the bilayer. At 150–168 (ERWLVVCKPFGNMRFDAKL) the chain is on the cytoplasmic side. A helical membrane pass occupies residues 169-192 (AIVGIAFSWIWSAVWTAPPIFGWS). Residues 193–218 (RYWPYGLKTSCGPDVFSGTSYPGVQS) lie on the Extracellular side of the membrane. The chain crosses the membrane as a helical span at residues 219–246 (YMMVLMVTCCIIPLSIIILCYLQVWLAI). Residues 247 to 268 (RAVAKQQKESESTQKAEKEVTR) are Cytoplasmic-facing. Residues 269–292 (MVVVMVFAYCLCWGPYTFFACFAT) traverse the membrane as a helical segment. Topologically, residues 293–300 (ANPGYAFH) are extracellular. A helical transmembrane segment spans residues 301 to 320 (PLVAALPAYFAKSATIYNPI). Lysine 312 carries the N6-(retinylidene)lysine modification. The Cytoplasmic portion of the chain corresponds to 321-364 (IYVFMNRQFRNCILQLFGKKVDDTSELSSASKTEASSVSSVSPA).

Belongs to the G-protein coupled receptor 1 family. Opsin subfamily. As to quaternary structure, monomer. Homodimer. Homotetramer. O-glycosylated. In terms of processing, phosphorylated on some or all of the serine and threonine residues present in the C-terminal region. In terms of tissue distribution, expressed in cone photoreceptor cells.

It localises to the membrane. Its function is as follows. Visual pigments are the light-absorbing molecules that mediate vision. They consist of an apoprotein, opsin, covalently linked to cis-retinal. May increase spectral sensitivity in dim light. In Sciurus carolinensis (Eastern gray squirrel), this protein is Medium-wave-sensitive opsin 1 (OPN1MW).